A 70-amino-acid polypeptide reads, in one-letter code: Conotoxin Lt11.6 (70 aa).

An N-terminal signal peptide occupies residues 1–26 (MMFRLTSVGSFLLVIVFLNLVVLTNA). 4 cysteine pairs are disulfide-bonded: Cys-27-Cys-41, Cys-34-Cys-46, Cys-40-Cys-50, and Cys-45-Cys-54. Positions 58 to 70 (AQRQKLLRSFGQR) are excised as a propeptide.

It belongs to the conotoxin I2 superfamily. Expressed by the venom duct.

The protein resides in the secreted. The polypeptide is Conotoxin Lt11.6 (Conus litteratus (Lettered cone)).